The sequence spans 519 residues: LysM domain-containing protein ARB_03442 (519 aa).

Residues 1 to 19 form the signal peptide; sequence MGQLKQLAGILALASPAIA. An N-linked (GlcNAc...) asparagine glycan is attached at N47. Residues 312–358 enclose the LysM domain; that stretch reads KYYNVVAGDTCASISSEFEVTMDELLTYNPELHPNCENLWANFAICV. The segment at 314 to 358 is lysM domain; it reads YNVVAGDTCASISSEFEVTMDELLTYNPELHPNCENLWANFAICV. Low complexity predominate over residues 407 to 416; sequence PDAPDAQGQT. Positions 407–458 are disordered; the sequence is PDAPDAQGQTVHDDEPPEEPHIEEPPKDIPAGDDDDRKKAKLPLPSGKYPLP. Over residues 417–433 the composition is skewed to basic and acidic residues; sequence VHDDEPPEEPHIEEPPK. N460 carries N-linked (GlcNAc...) asparagine glycosylation. The 44-residue stretch at 467–510 folds into the Chitin-binding type-1 domain; the sequence is DGSCNEYISCVGSPFGVCCSTSGWCGYGKPWCGVGNCVSGYCDT. Intrachain disulfides connect C470–C485, C476–C491, C484–C498, and C503–C508.

It localises to the secreted. In terms of biological role, might have a role in sequestration of chitin oligosaccharides (breakdown products of fungal cell walls that are released during invasion and act as triggers of host immunity) to dampen host defense. This chain is LysM domain-containing protein ARB_03442, found in Arthroderma benhamiae (strain ATCC MYA-4681 / CBS 112371) (Trichophyton mentagrophytes).